A 393-amino-acid polypeptide reads, in one-letter code: NAD(P)H-quinone oxidoreductase subunit H, chloroplastic (393 aa).

This sequence belongs to the complex I 49 kDa subunit family. NDH is composed of at least 16 different subunits, 5 of which are encoded in the nucleus.

Its subcellular location is the plastid. The protein localises to the chloroplast thylakoid membrane. It carries out the reaction a plastoquinone + NADH + (n+1) H(+)(in) = a plastoquinol + NAD(+) + n H(+)(out). It catalyses the reaction a plastoquinone + NADPH + (n+1) H(+)(in) = a plastoquinol + NADP(+) + n H(+)(out). In terms of biological role, NDH shuttles electrons from NAD(P)H:plastoquinone, via FMN and iron-sulfur (Fe-S) centers, to quinones in the photosynthetic chain and possibly in a chloroplast respiratory chain. The immediate electron acceptor for the enzyme in this species is believed to be plastoquinone. Couples the redox reaction to proton translocation, and thus conserves the redox energy in a proton gradient. This chain is NAD(P)H-quinone oxidoreductase subunit H, chloroplastic, found in Ranunculus macranthus (Large buttercup).